The primary structure comprises 284 residues: Bifunctional protein FolD (284 aa).

Residues Gly164 to Ser166 and Ser189 each bind NADP(+).

Belongs to the tetrahydrofolate dehydrogenase/cyclohydrolase family. Homodimer.

The catalysed reaction is (6R)-5,10-methylene-5,6,7,8-tetrahydrofolate + NADP(+) = (6R)-5,10-methenyltetrahydrofolate + NADPH. It catalyses the reaction (6R)-5,10-methenyltetrahydrofolate + H2O = (6R)-10-formyltetrahydrofolate + H(+). It participates in one-carbon metabolism; tetrahydrofolate interconversion. Functionally, catalyzes the oxidation of 5,10-methylenetetrahydrofolate to 5,10-methenyltetrahydrofolate and then the hydrolysis of 5,10-methenyltetrahydrofolate to 10-formyltetrahydrofolate. In Listeria welshimeri serovar 6b (strain ATCC 35897 / DSM 20650 / CCUG 15529 / CIP 8149 / NCTC 11857 / SLCC 5334 / V8), this protein is Bifunctional protein FolD.